The sequence spans 195 residues: Orotate phosphoribosyltransferase (195 aa).

5-phospho-alpha-D-ribose 1-diphosphate is bound by residues arginine 86, lysine 90, histidine 92, and 111 to 119 (DDVATTGVS). Threonine 115 and arginine 143 together coordinate orotate.

It belongs to the purine/pyrimidine phosphoribosyltransferase family. PyrE subfamily. Homodimer. The cofactor is Mg(2+).

The catalysed reaction is orotidine 5'-phosphate + diphosphate = orotate + 5-phospho-alpha-D-ribose 1-diphosphate. The protein operates within pyrimidine metabolism; UMP biosynthesis via de novo pathway; UMP from orotate: step 1/2. In terms of biological role, catalyzes the transfer of a ribosyl phosphate group from 5-phosphoribose 1-diphosphate to orotate, leading to the formation of orotidine monophosphate (OMP). The protein is Orotate phosphoribosyltransferase of Saccharolobus solfataricus (strain ATCC 35092 / DSM 1617 / JCM 11322 / P2) (Sulfolobus solfataricus).